The chain runs to 415 residues: G2/mitotic-specific cyclin cig1 (415 aa).

2 disordered regions span residues 54–74 and 86–118; these read PTLI…DTFE and EERS…ILTH. Residues 57–71 are compositionally biased toward low complexity; the sequence is IEGNNESSISSSTGD. S96 carries the phosphoserine modification.

It belongs to the cyclin family. Cyclin G subfamily.

Required for efficient passage of the G1/S transition. The protein is G2/mitotic-specific cyclin cig1 (cig1) of Schizosaccharomyces pombe (strain 972 / ATCC 24843) (Fission yeast).